We begin with the raw amino-acid sequence, 1122 residues long: Angiopoietin-1 receptor (1122 aa).

The N-terminal stretch at 1 to 22 (MDSLAGLVLCGVSLLLYGVVEG) is a signal peptide. Residues 23–746 (AMDLILINSL…SADLGGGKML (724 aa)) lie on the Extracellular side of the membrane. A disulfide bond links Cys-44 and Cys-102. The 80-residue stretch at 44-123 (CIASGWHPHE…RTMKMRQQAS (80 aa)) folds into the Ig-like C2-type 1 domain. 2 N-linked (GlcNAc...) asparagine glycosylation sites follow: Asn-140 and Asn-158. EGF-like domains lie at 210 to 252 (RCEA…RTCE), 254 to 299 (ACEP…LQCN), and 301 to 341 (ACPS…LQCE). 13 cysteine pairs are disulfide-bonded: Cys-211–Cys-220, Cys-224–Cys-233, Cys-227–Cys-240, Cys-242–Cys-251, Cys-255–Cys-264, Cys-268–Cys-274, Cys-280–Cys-287, Cys-289–Cys-298, Cys-302–Cys-311, Cys-315–Cys-323, Cys-317–Cys-329, Cys-331–Cys-340, and Cys-370–Cys-424. Positions 350-440 (PQIEDLPDHI…GMVEKPFNIS (91 aa)) constitute an Ig-like C2-type 2 domain. N-linked (GlcNAc...) asparagine glycosylation is found at Asn-399, Asn-438, Asn-464, Asn-558, Asn-595, Asn-648, and Asn-690. Fibronectin type-III domains follow at residues 444 to 539 (LPEP…TASI), 543 to 635 (PPRG…TLSD), and 640 to 733 (QPEN…TLPH). The chain crosses the membrane as a helical span at residues 747-767 (LIAILGSAGMTCITVLLAFLI). Over 768-1122 (MLQLKRANVQ…GIDCSAEEAA (355 aa)) the chain is Cytoplasmic. Residues 822–1094 (IKFQDVIGEG…QILVSLNRML (273 aa)) form the Protein kinase domain. Residues 828-836 (IGEGNFGQV) and Lys-853 contribute to the ATP site. Tyr-858 is subject to Phosphotyrosine; by autocatalysis. Catalysis depends on Asp-962, which acts as the Proton acceptor. 3 positions are modified to phosphotyrosine; by autocatalysis: Tyr-990, Tyr-1100, and Tyr-1106.

The protein belongs to the protein kinase superfamily. Tyr protein kinase family. Tie subfamily. As to quaternary structure, homodimer. Heterodimer with TIE1. Interacts with ANGPT1, ANGPT2 and ANGPT4. At cell-cell contacts in quiescent cells, forms a signaling complex composed of ANGPT1 plus TEK molecules from two adjoining cells. In the absence of endothelial cell-cell contacts, interaction with ANGPT1 mediates contacts with the extracellular matrix. Interacts (tyrosine phosphorylated) with TNIP2. Interacts (tyrosine phosphorylated) with SHC1 (via SH2 domain). Interacts with PTPRB; this promotes endothelial cell-cell adhesion. Interacts with DOK2, GRB2, GRB7, GRB14, PIK3R1 and PTPN11/SHP2. Colocalizes with DOK2 at contacts with the extracellular matrix in migrating cells. Post-translationally, proteolytic processing leads to the shedding of the extracellular domain (soluble TIE-2 alias sTIE-2). Autophosphorylated on tyrosine residues in response to ligand binding. Autophosphorylation occurs in trans, i.e. one subunit of the dimeric receptor phosphorylates tyrosine residues on the other subunit. Autophosphorylation occurs in a sequential manner, where Tyr-990 in the kinase activation loop is phosphorylated first, followed by autophosphorylation at Tyr-1106 and at additional tyrosine residues. ANGPT1-induced phosphorylation is impaired during hypoxia, due to increased expression of ANGPT2. Phosphorylation is important for interaction with GRB14, PIK3R1 and PTPN11. Phosphorylation at Tyr-1100 is important for interaction with GRB2 and GRB7. Phosphorylation at Tyr-1106 is important for interaction with DOK2 and for coupling to downstream signal transduction pathways in endothelial cells. Dephosphorylated by PTPRB. In terms of processing, ubiquitinated. The phosphorylated receptor is ubiquitinated and internalized, leading to its degradation. As to expression, specifically expressed in developing vascular endothelial cells. Abundantly expressed in lung and heart, moderately in brain, liver and kidney, and weakly in thymus, spleen and testis.

It localises to the cell membrane. It is found in the cell junction. The protein localises to the focal adhesion. The protein resides in the cytoplasm. Its subcellular location is the cytoskeleton. It localises to the secreted. It catalyses the reaction L-tyrosyl-[protein] + ATP = O-phospho-L-tyrosyl-[protein] + ADP + H(+). With respect to regulation, angiopoietin binding leads to receptor dimerization and activation by autophosphorylation at Tyr-990 on the kinase activation loop. Functionally, tyrosine-protein kinase that acts as a cell-surface receptor for ANGPT1, ANGPT2 and ANGPT4 and regulates angiogenesis, endothelial cell survival, proliferation, migration, adhesion and cell spreading, reorganization of the actin cytoskeleton, but also maintenance of vascular quiescence. Has anti-inflammatory effects by preventing the leakage of pro-inflammatory plasma proteins and leukocytes from blood vessels. Required for normal angiogenesis and heart development during embryogenesis. Required for postnatal hematopoiesis. After birth, activates or inhibits angiogenesis, depending on the context. Inhibits angiogenesis and promotes vascular stability in quiescent vessels, where endothelial cells have tight contacts. In quiescent vessels, ANGPT1 oligomers recruit TEK to cell-cell contacts, forming complexes with TEK molecules from adjoining cells, and this leads to preferential activation of phosphatidylinositol 3-kinase and the AKT1 signaling cascades. In migrating endothelial cells that lack cell-cell adhesions, ANGT1 recruits TEK to contacts with the extracellular matrix, leading to the formation of focal adhesion complexes, activation of PTK2/FAK and of the downstream kinases MAPK1/ERK2 and MAPK3/ERK1, and ultimately to the stimulation of sprouting angiogenesis. ANGPT1 signaling triggers receptor dimerization and autophosphorylation at specific tyrosine residues that then serve as binding sites for scaffold proteins and effectors. Signaling is modulated by ANGPT2 that has lower affinity for TEK, can promote TEK autophosphorylation in the absence of ANGPT1, but inhibits ANGPT1-mediated signaling by competing for the same binding site. Signaling is also modulated by formation of heterodimers with TIE1, and by proteolytic processing that gives rise to a soluble TEK extracellular domain. The soluble extracellular domain modulates signaling by functioning as decoy receptor for angiopoietins. TEK phosphorylates DOK2, GRB7, GRB14, PIK3R1, SHC1 and TIE1. This chain is Angiopoietin-1 receptor (Tek), found in Mus musculus (Mouse).